Consider the following 875-residue polypeptide: Valine--tRNA ligase (875 aa).

The 'HIGH' region signature appears at 45–55 (PNVTGVLHMGH). The 'KMSKS' region signature appears at 524–528 (KMSKS). Residue Lys527 participates in ATP binding. Residues 803–837 (VKLLIDKTKELIRLEKQLEKYKMLKISVSKKLENE) are a coiled coil.

The protein belongs to the class-I aminoacyl-tRNA synthetase family. ValS type 1 subfamily. As to quaternary structure, monomer.

Its subcellular location is the cytoplasm. It catalyses the reaction tRNA(Val) + L-valine + ATP = L-valyl-tRNA(Val) + AMP + diphosphate. Catalyzes the attachment of valine to tRNA(Val). As ValRS can inadvertently accommodate and process structurally similar amino acids such as threonine, to avoid such errors, it has a 'posttransfer' editing activity that hydrolyzes mischarged Thr-tRNA(Val) in a tRNA-dependent manner. The chain is Valine--tRNA ligase from Borrelia garinii subsp. bavariensis (strain ATCC BAA-2496 / DSM 23469 / PBi) (Borreliella bavariensis).